Consider the following 1940-residue polypeptide: Myosin-1B (1940 aa).

Positions 33–82 (DAKSSVFVVHAKESYVKSTIQSKESGKVTVKTEGGETLTVKEDQIFSMNP) constitute a Myosin N-terminal SH3-like domain. Residues 86–783 (DKIEDMAMMT…LLGLLEEMRD (698 aa)) form the Myosin motor domain. At K130 the chain carries N6,N6,N6-trimethyllysine. Residue 179–186 (GESGAGKT) participates in ATP binding. 2 actin-binding regions span residues 660–682 (LNKL…IPNE) and 762–776 (KFGH…GLLG). Residues 786-815 (LAQLITRTQARCRGFLMRVEFKKMMERRES) form the IQ domain. Residues 844 to 1940 (LLKSAESEKE…EIGKKAESEE (1097 aa)) are a coiled coil. A disordered region spans residues 1912–1940 (EERADIAESQVNKLRAKSREIGKKAESEE). The span at 1928–1940 (KSREIGKKAESEE) shows a compositional bias: basic and acidic residues.

It belongs to the TRAFAC class myosin-kinesin ATPase superfamily. Myosin family. As to quaternary structure, muscle myosin is a hexameric protein that consists of 2 heavy chain subunits (MHC), 2 alkali light chain subunits (MLC) and 2 regulatory light chain subunits (MLC-2).

It is found in the cytoplasm. The protein resides in the myofibril. Its function is as follows. Muscle contraction. This is Myosin-1B (MYH1B) from Gallus gallus (Chicken).